The following is a 422-amino-acid chain: Osteomodulin (422 aa).

The signal sequence occupies residues 1 to 20 (MGFSSLVCVLFFFLGVKVYC). Positions 21-27 (QYESYQW) are excised as a propeptide. A sulfotyrosine mark is found at Tyr22, Tyr25, Tyr31, Tyr39, Tyr51, and Tyr77. Positions 53-91 (APFHQHTLGCASECFCPPNFPSSMYCDNRKLKTIPNIPA) constitute an LRRNT domain. 11 LRR repeats span residues 92 to 113 (HIQQVYLQFNEIEAVTADSFIN), 116 to 129 (HLKEINLSHNKIKS), 142 to 164 (NLLQLHLQHNNLEDFPFPLPKSL), 165 to 184 (ERIFLGYNEISRLQTNAVNG), 187 to 207 (NLTMLDLCFNKIDDSVLQEKV), 213 to 233 (KLMQLNLCNNRLESMPPGLPS), 234 to 255 (SLMYLSLENNSISSIPENYFNK), 258 to 280 (KLHALRISHNKLQDIPYNIFNLS), 281 to 294 (NLIELNVGHNKLKQ), 301 to 322 (NLEHLYLENNEIENVNVTVMCP), and 331 to 353 (HLTHIRIDQNKLKAPISSYIFLC). Residues Asn113 and Asn121 are each glycosylated (N-linked (GlcNAc...) asparagine). Asn187 carries an N-linked (GlcNAc...) asparagine glycan. N-linked (GlcNAc...) asparagine glycosylation is found at Asn242 and Asn278. N-linked (GlcNAc...) asparagine glycosylation is present at Asn316. Cysteines 321 and 353 form a disulfide. A disordered region spans residues 385–422 (DDGDSEDHDDHHEGPEEEGTEENIDAHYYGSQEWQETI). Residues Tyr412 and Tyr413 each carry the sulfotyrosine modification.

This sequence belongs to the small leucine-rich proteoglycan (SLRP) family. SLRP class II subfamily. Binds the alpha(V)beta(3)-integrin. In terms of processing, the N-terminus is blocked. Post-translationally, glycosylated; contains keratan sulfate. Sulfated on tyrosine residue(s). As to expression, bone specific (at protein level).

Its subcellular location is the secreted. The protein resides in the extracellular space. It localises to the extracellular matrix. Functionally, may be implicated in biomineralization processes. Has a function in binding of osteoblasts via the alpha(V)beta(3)-integrin. This Bos taurus (Bovine) protein is Osteomodulin (OMD).